A 554-amino-acid chain; its full sequence is MKSDIEIAQDARMEPIEEIAEKAGLHKDQIELYGKYKAKVNTDIIDDDKKDGKLVLVTAITPTPAGEGKTTTTVGLGQALNLLGKKAIIALREPSLGPTMGIKGGAAGGGYSQVLPMEDINLHFTGDIHAIGAAHNLLSAVIDNHIKQGNDLGIDPTSVTWKRVVDMNDRALRNIVVGLGGKAHGVPREDGFMITVASEIMAILCLANNLEDLKNKISNIVVGYTYDGEAITAGDLKVSGAMTALLKDAIKPNLVQTLENTPAFIHGGPFANIAHGCNSIMATKMALKLGEITVTEAGFGADLGAEKFFNIKCRYAGLNPDAAVVVATVRALKMHGGVDKDSLSEENLDALARGFENLEKHLENVSKFGVPSVVAINRFPGDTEAELNLVRDKCEEMGVPVAISEVWARGGEGGLDLARKLVDVLENTPGQFSYLYDVNFPITDKIEKIAKEIYGADGVNYTSKALKQIDKYTELGYDKLPICMAKTQSSISDDPSLKGRPRGFRINVREVNLSAGAGFIIPLTGPVLTMPGLPKKPAAEGIDIDADGKISGLF.

63 to 70 (TPAGEGKT) is a binding site for ATP.

Belongs to the formate--tetrahydrofolate ligase family.

The catalysed reaction is (6S)-5,6,7,8-tetrahydrofolate + formate + ATP = (6R)-10-formyltetrahydrofolate + ADP + phosphate. Its pathway is one-carbon metabolism; tetrahydrofolate interconversion. This is Formate--tetrahydrofolate ligase from Halothermothrix orenii (strain H 168 / OCM 544 / DSM 9562).